A 377-amino-acid chain; its full sequence is Succinyl-diaminopimelate desuccinylase (377 aa).

Position 67 (His67) interacts with Zn(2+). Residue Asp69 is part of the active site. Asp100 is a binding site for Zn(2+). The active-site Proton acceptor is Glu134. Positions 135, 163, and 349 each coordinate Zn(2+).

The protein belongs to the peptidase M20A family. DapE subfamily. In terms of assembly, homodimer. It depends on Zn(2+) as a cofactor. Co(2+) serves as cofactor.

The enzyme catalyses N-succinyl-(2S,6S)-2,6-diaminopimelate + H2O = (2S,6S)-2,6-diaminopimelate + succinate. Its pathway is amino-acid biosynthesis; L-lysine biosynthesis via DAP pathway; LL-2,6-diaminopimelate from (S)-tetrahydrodipicolinate (succinylase route): step 3/3. In terms of biological role, catalyzes the hydrolysis of N-succinyl-L,L-diaminopimelic acid (SDAP), forming succinate and LL-2,6-diaminopimelate (DAP), an intermediate involved in the bacterial biosynthesis of lysine and meso-diaminopimelic acid, an essential component of bacterial cell walls. The chain is Succinyl-diaminopimelate desuccinylase from Actinobacillus pleuropneumoniae serotype 3 (strain JL03).